The sequence spans 549 residues: Chaperonin GroEL (549 aa).

Residues 30–33 (TLGP), Lys51, 87–91 (DGTTT), Gly415, and Asp497 each bind ATP.

The protein belongs to the chaperonin (HSP60) family. In terms of assembly, forms a cylinder of 14 subunits composed of two heptameric rings stacked back-to-back. Interacts with the co-chaperonin GroES.

The protein localises to the cytoplasm. The catalysed reaction is ATP + H2O + a folded polypeptide = ADP + phosphate + an unfolded polypeptide.. In terms of biological role, together with its co-chaperonin GroES, plays an essential role in assisting protein folding. The GroEL-GroES system forms a nano-cage that allows encapsulation of the non-native substrate proteins and provides a physical environment optimized to promote and accelerate protein folding. The sequence is that of Chaperonin GroEL from Pectobacterium atrosepticum (strain SCRI 1043 / ATCC BAA-672) (Erwinia carotovora subsp. atroseptica).